The following is a 217-amino-acid chain: Large ribosomal subunit protein uL1 (217 aa).

It belongs to the universal ribosomal protein uL1 family.

In Drosophila melanogaster (Fruit fly), this protein is Large ribosomal subunit protein uL1 (RpL10Ab).